Reading from the N-terminus, the 453-residue chain is Aryl hydrocarbon receptor nuclear translocator homolog (453 aa).

A bHLH domain is found at 44–97; that stretch reads FARENHSEIERRRRNKMTHYINELAEMVPQCASLGRKPDKLTILRMAVSHMKGI. 2 consecutive PAS domains span residues 115-193 and 277-347; these read DQEL…LDLK and ASMP…LSDQ. The region spanning 348-392 is the PAC domain; it reads PMRINIRVRTSTDYIPCTVSAYKFMNPYSEQFEYVVATHQIAPQE. Residues 410-453 are disordered; that stretch reads EFGELGGAPSAVDYGQSSSGGWRPEAQGAPQAQWQWDPMNGYNQ.

In terms of assembly, interacts with hif-1. Heterodimer; efficient DNA binding requires dimerization with another bHLH protein. Forms a heterodimer with ahr-1; binds DNA as heterodimer. Forms a heterodimer with PAS domain-containing protein cky-1; binds DNA as heterodimer. In terms of tissue distribution, expressed in many cell types throughout development, including hypodermal cells, intestinal cells, pharyngeal cells, and neurons. Expressed in every cell during embryo.

The protein resides in the nucleus. Functionally, transcription factor. Efficient DNA binding requires dimerization with another bHLH protein, such as cky-1 or ahr-1. Regulates transcription of target genes, probably acting in complex with cky-1. Has a role in cellular differentiation. Required for pharyngeal development. In collaboration with ahr-1 it is involved in RMEL/R and SDQR neuron cell migration. Acts in the cellular response to hypoxia. Involved in aggregation behavior by regulating soluble guanylate cyclase gene expression in the URX neurons. The chain is Aryl hydrocarbon receptor nuclear translocator homolog from Caenorhabditis elegans.